We begin with the raw amino-acid sequence, 185 residues long: Threonylcarbamoyl-AMP synthase (185 aa).

In terms of domain architecture, YrdC-like spans 4–185; that stretch reads SFRAQCAARV…LVTGQVIRPA (182 aa).

Belongs to the SUA5 family. TsaC subfamily.

It is found in the cytoplasm. It catalyses the reaction L-threonine + hydrogencarbonate + ATP = L-threonylcarbamoyladenylate + diphosphate + H2O. Its function is as follows. Required for the formation of a threonylcarbamoyl group on adenosine at position 37 (t(6)A37) in tRNAs that read codons beginning with adenine. Catalyzes the conversion of L-threonine, HCO(3)(-)/CO(2) and ATP to give threonylcarbamoyl-AMP (TC-AMP) as the acyladenylate intermediate, with the release of diphosphate. This chain is Threonylcarbamoyl-AMP synthase, found in Pseudomonas aeruginosa (strain UCBPP-PA14).